A 194-amino-acid polypeptide reads, in one-letter code: NAD(P)H:quinone oxidoreductase (194 aa).

Belongs to the SsuE family. In terms of assembly, homotetramer. Requires FMN as cofactor.

The catalysed reaction is a quinone + NADH + H(+) = a quinol + NAD(+). It catalyses the reaction a quinone + NADPH + H(+) = a quinol + NADP(+). Functionally, the enzyme apparently serves as a quinone reductase in connection with conjugation reactions of hydroquinones involved in detoxification pathways. This chain is NAD(P)H:quinone oxidoreductase, found in Solanum tuberosum (Potato).